Here is a 391-residue protein sequence, read N- to C-terminus: Transaldolase (391 aa).

The Schiff-base intermediate with substrate role is filled by lysine 134. EF-hand domains follow at residues 329–364 (TLTHAAEELFHVYDLDGDGIITREEWLGTDAVFDAL) and 365–387 (DANHDGKVTPEDMGAGLGVVLHL). 9 residues coordinate Ca(2+): aspartate 342, aspartate 344, aspartate 346, glutamate 353, aspartate 365, asparagine 367, aspartate 369, lysine 371, and aspartate 376.

The protein belongs to the transaldolase family. Type 1 subfamily.

It localises to the cytoplasm. The catalysed reaction is D-sedoheptulose 7-phosphate + D-glyceraldehyde 3-phosphate = D-erythrose 4-phosphate + beta-D-fructose 6-phosphate. It functions in the pathway carbohydrate degradation; pentose phosphate pathway; D-glyceraldehyde 3-phosphate and beta-D-fructose 6-phosphate from D-ribose 5-phosphate and D-xylulose 5-phosphate (non-oxidative stage): step 2/3. Transaldolase is important for the balance of metabolites in the pentose-phosphate pathway. The chain is Transaldolase from Thermosynechococcus vestitus (strain NIES-2133 / IAM M-273 / BP-1).